Here is a 1211-residue protein sequence, read N- to C-terminus: Diacylglycerol kinase eta (1211 aa).

Residues Met-1–Glu-66 form a disordered region. Low complexity predominate over residues Ala-19–Gly-32. Residues Val-52–Lys-61 show a composition bias toward polar residues. In terms of domain architecture, PH spans Thr-62–Ser-155. 2 Phorbol-ester/DAG-type zinc fingers span residues Met-172–Cys-222 and Pro-244–Cys-295. The DAGKc domain occupies Phe-325–Glu-460. Disordered regions lie at residues Ser-562–Glu-613 and Lys-634–Gly-694. 2 stretches are compositionally biased toward acidic residues: residues Pro-576–Leu-589 and Tyr-653–Glu-662. Residues Ser-670–Ser-691 are compositionally biased toward polar residues. The 64-residue stretch at Trp-1143–Asn-1206 folds into the SAM domain.

The protein belongs to the eukaryotic diacylglycerol kinase family. In terms of assembly, interacts with RAF1 and BRAF. As to quaternary structure, homooligomers. Heterooligomers. Oligomerization through the SAM domain inhibits the diacylglycerol kinase activity. Heterooligomerizes with SAM domain-containing isoforms of DGKD. Does not form homooligomers. In terms of processing, phosphorylated. Phosphorylation does not inhibit catalytic activity. In terms of tissue distribution, widely expressed. Detected in the granulosa cells of the primary and secondary follicles. Expressed in mature follicles and corpus lutea. Expressed in the oviductal epithelium. In the uterus, strongly expressed in the luminal epithelium. Detected in the uterine glands. As to expression, detected in ovary and uterus (at protein level). Specifically expressed in testis. Detected in the inner area of the testis. Strongly expressed in the secondary spermatocytes and the round spermatids and weakly detected in the primary spermatocytes.

The protein localises to the cytoplasm. It is found in the cell membrane. It localises to the cytoskeleton. It carries out the reaction a 1,2-diacyl-sn-glycerol + ATP = a 1,2-diacyl-sn-glycero-3-phosphate + ADP + H(+). The catalysed reaction is 1,2-di-(9Z-octadecenoyl)-sn-glycerol + ATP = 1,2-di-(9Z-octadecenoyl)-sn-glycero-3-phosphate + ADP + H(+). It functions in the pathway lipid metabolism; glycerolipid metabolism. Functionally, diacylglycerol kinase that converts diacylglycerol/DAG into phosphatidic acid/phosphatidate/PA and regulates the respective levels of these two bioactive lipids. Thereby, acts as a central switch between the signaling pathways activated by these second messengers with different cellular targets and opposite effects in numerous biological processes. Plays a key role in promoting cell growth. Activates the Ras/B-Raf/C-Raf/MEK/ERK signaling pathway induced by EGF. Regulates the recruitment of RAF1 and BRAF from cytoplasm to membranes and their heterodimerization. The chain is Diacylglycerol kinase eta from Mus musculus (Mouse).